An 861-amino-acid chain; its full sequence is Benzylsuccinate synthase alpha subunit (861 aa).

Residues 40 to 712 (TERTRRLKAR…QAVGLYMEVG (673 aa)) form the PFL domain. The disordered stretch occupies residues 718-744 (TPDGRFGGEAADDGGISPYSGTDKKGP). The Glycine radical domain maps to 731 to 850 (GGISPYSGTD…IIARNEQNFN (120 aa)). Residue G825 is modified to Glycine radical.

Belongs to the glycyl radical enzyme (GRE) family. BSS subfamily. In terms of assembly, heterohexamer composed of 2 alpha subunits, 2 beta subunits and 2 gamma subunits.

The catalysed reaction is toluene + fumarate = 2-benzylsuccinate. It functions in the pathway xenobiotic degradation; toluene degradation. Its activity is regulated as follows. Activated by the benzylsuccinate synthase activating enzyme BssD. Rapidly inactivated by oxygen. Functionally, catalyzes the addition of fumarate to the methyl group of toluene, leading to the formation of benzylsuccinate. The sequence is that of Benzylsuccinate synthase alpha subunit (bssA) from Thauera aromatica.